The sequence spans 797 residues: Plakophilin-3 (797 aa).

The tract at residues 58–81 (GQQSRHNGSAELDGSAESARGMPR) is disordered. Omega-N-methylarginine is present on arginine 81. 3 positions are modified to phosphoserine: serine 123, serine 180, and serine 183. The residue at position 195 (tyrosine 195) is a Phosphotyrosine. The span at 219 to 228 (ASSGSSRAGG) shows a compositional bias: low complexity. The segment at 219-241 (ASSGSSRAGGLDWPEATEGPPSR) is disordered. Serine 240 is modified (phosphoserine). Threonine 250 carries the post-translational modification Phosphothreonine. Residues 253–274 (RFQSSHRSRGGTGSVSGAGLEP) form a disordered region. An Omega-N-methylarginine modification is found at arginine 261. Residues 283-288 (SLSLSL) are required for interaction with SFN. Serine 285, serine 313, serine 314, and serine 331 each carry phosphoserine. The segment at 294–724 (LPDVRGLDSY…AEVLVNIIAV (431 aa)) is required for interaction with GSK3B. 8 ARM repeats span residues 305 to 348 (GHRT…HRCY), 351 to 390 (AAAK…NLIY), 393 to 432 (VDNK…NLSS), 449 to 487 (TDLV…NLSS), 491 to 536 (ATRQ…NLSY), 596 to 637 (PKGL…NITA), 645 to 684 (VLSR…NLSR), and 689 to 730 (KDEM…NLVV). Residues 516 to 797 (VGKCEDKSVE…GYRKEDFLGP (282 aa)) form a required for binding to PKP2 mRNA region.

It belongs to the beta-catenin family. Found in a complex composed of CDH1, RAP1A and PKP3; PKP3 acts as a scaffold protein within the complex, the complex is required for CDH1 localization to mature desmosome cell junctions. Interacts with FXR1; the interaction facilitates the binding of PKP3 to PKP2 mRNA. Interacts (via ARM repeats) with GSK3B; the interaction may be involved in PKP3 protein degradation. Interacts with hyperphosphorylated and hypophosphorylated RB1; the interaction inhibits RB1 interaction with and repression of the transcription factor E2F1, potentially via sequestering RB1 to the cytoplasm. Interacts with CDKN1A; the interaction sequesters CDKN1A to the cytoplasm thereby repressing its role as an inhibitor of CDK4- and CDK6-driven RB1 phosphorylation. Interacts (via N-terminus) with SFN; the interaction maintains the cytoplasmic pool of PKP3, facilitates PKP3 exchange at desmosomes and restricts PKP3 localization to existing desmosome cell junctions. Interacts (via N-terminus) with JUP; the interaction is required for PKP3 localization to desmosome cell-cell junctions. Post-translationally, phosphorylated at Ser-285 when localized to the cytoplasm, PKP3 at desmosome cell junctions is not phosphorylated. Phosphorylation at Try-195 by SRC is induced by reactive oxygen species and potentially acts as a release mechanism from desmosome cell-cell junctions. Expressed in all layers of the epidermis, but is most abundant in the basal layer (at protein level). Expressed in keratinocytes of the epidermis at birth (at protein level). Expressed in the anagen non-keratinized inner root sheath cuticle and hair cuticle (at protein level). Also expressed in the matrix, precursors of the inner root sheath and hair shaft lineages (at protein level). Expressed at apical membranes in the outer hair root sheath and basal layer keratinocytes (at protein level). Expressed in intestinal epithelial cells and lamina propria of the ileum (at protein level). Expressed in keratinocytes (at protein level).

The protein localises to the nucleus. It is found in the cell junction. The protein resides in the desmosome. It localises to the cytoplasm. Its subcellular location is the cell membrane. The protein localises to the adherens junction. Its function is as follows. A component of desmosome cell-cell junctions which are required for positive regulation of cellular adhesion. Required for the localization of DSG2, DSP and PKP2 to mature desmosome junctions. May also play a role in the maintenance of DSG3 protein abundance in keratinocytes. Required for the formation of DSP-containing desmosome precursors in the cytoplasm during desmosome assembly. Also regulates the accumulation of CDH1 to mature desmosome junctions, via cAMP-dependent signaling and its interaction with activated RAP1A. Positively regulates the stabilization of PKP2 mRNA and therefore protein abundance, via its interaction with FXR1, may also regulate the protein abundance of DSP via the same mechanism. May also regulate the protein abundance of the desmosome component PKP1. Required for the organization of desmosome junctions at intercellular borders between basal keratinocytes of the epidermis, as a result plays a role in maintenance of the dermal barrier and regulation of the dermal inflammatory response. Required during epidermal keratinocyte differentiation for cell adherence at tricellular cell-cell contacts, via regulation of the timely formation of adherens junctions and desmosomes in a calcium-dependent manner, and may also play a role in the organization of the intracellular actin fiber belt. Acts as a negative regulator of the inflammatory response in hematopoietic cells of the skin and intestine, via modulation of proinflammatory cytokine production. Important for epithelial barrier maintenance in the intestine to reduce intestinal permeability, thereby plays a role in protection from intestinal-derived endotoxemia. Required for the development of hair follicles, via a role in the regulation of inner root sheaf length, correct alignment and anterior-posterior polarity of hair follicles. Promotes proliferation and cell-cycle G1/S phase transition of keratinocytes. Promotes E2F1-driven transcription of G1/S phase promoting genes by acting to release E2F1 from its inhibitory interaction with RB1, via sequestering RB1 and CDKN1A to the cytoplasm and thereby increasing CDK4- and CDK6-driven phosphorylation of RB1. May act as a scaffold protein to facilitate MAPK phosphorylation of RPS6KA protein family members and subsequently promote downstream EGFR signaling. May play a role in the positive regulation of transcription of Wnt-mediated TCF-responsive target genes. This is Plakophilin-3 (Pkp3) from Mus musculus (Mouse).